Here is a 697-residue protein sequence, read N- to C-terminus: General transcription factor IIH subunit 1 (697 aa).

Residues 115-136 (LPVSASNGSNTTSPTNGTSPIN) are compositionally biased toward low complexity. 2 disordered regions span residues 115 to 141 (LPVSASNGSNTTSPTNGTSPINGTSPT) and 228 to 250 (KNDSTRSEKQHTGMPSNLLADVR). BSD domains are found at residues 174–231 (LSKL…KNDS) and 255–307 (TPNA…YFYR). Basic and acidic residues predominate over residues 412–422 (KNLKKTKKDEN). Residues 412-462 (KNLKKTKKDENSTSTPTTTTTTTNTTNTTNTTTTTTTNNTTIKDPNLYNGD) are disordered. Residues 423-452 (STSTPTTTTTTTNTTNTTNTTTTTTTNNTT) show a composition bias toward low complexity.

Belongs to the TFB1 family. In terms of assembly, component of the 7-subunit TFIIH core complex composed of XPB/repB, XPD/repD, gtf2h1, gtf2h2, gtf2h3, gtf2h4 and gtf2h5, which is active in NER. The core complex associates with the 3-subunit CDK-activating kinase (CAK) module composed of cycH/cyclin H, cdk7 and mnat1 to form the 10-subunit holoenzyme (holo-TFIIH) active in transcription.

It localises to the nucleus. In terms of biological role, component of the general transcription and DNA repair factor IIH (TFIIH) core complex, which is involved in general and transcription-coupled nucleotide excision repair (NER) of damaged DNA and, when complexed to CAK, in RNA transcription by RNA polymerase II. In NER, TFIIH acts by opening DNA around the lesion to allow the excision of the damaged oligonucleotide and its replacement by a new DNA fragment. In transcription, TFIIH has an essential role in transcription initiation. When the pre-initiation complex (PIC) has been established, TFIIH is required for promoter opening and promoter escape. Phosphorylation of the C-terminal tail (CTD) of the largest subunit of RNA polymerase II by the kinase module CAK controls the initiation of transcription. This is General transcription factor IIH subunit 1 (gtf2h1) from Dictyostelium discoideum (Social amoeba).